Here is a 126-residue protein sequence, read N- to C-terminus: Large ribosomal subunit protein uL22 (126 aa).

The protein belongs to the universal ribosomal protein uL22 family. In terms of assembly, part of the 50S ribosomal subunit.

Its function is as follows. This protein binds specifically to 23S rRNA; its binding is stimulated by other ribosomal proteins, e.g. L4, L17, and L20. It is important during the early stages of 50S assembly. It makes multiple contacts with different domains of the 23S rRNA in the assembled 50S subunit and ribosome. In terms of biological role, the globular domain of the protein is located near the polypeptide exit tunnel on the outside of the subunit, while an extended beta-hairpin is found that lines the wall of the exit tunnel in the center of the 70S ribosome. This chain is Large ribosomal subunit protein uL22, found in Bradyrhizobium sp. (strain BTAi1 / ATCC BAA-1182).